A 143-amino-acid chain; its full sequence is Anti-sigma F factor (143 aa).

It belongs to the anti-sigma-factor family.

It catalyses the reaction L-seryl-[protein] + ATP = O-phospho-L-seryl-[protein] + ADP + H(+). The catalysed reaction is L-threonyl-[protein] + ATP = O-phospho-L-threonyl-[protein] + ADP + H(+). Its function is as follows. Binds to sigma F and blocks its ability to form an RNA polymerase holoenzyme (E-sigma F). Phosphorylates SpoIIAA on a serine residue. This phosphorylation may enable SpoIIAA to act as an anti-anti-sigma factor that counteracts SpoIIAB and thus releases sigma F from inhibition. This Thermoanaerobacter pseudethanolicus (strain ATCC 33223 / 39E) (Clostridium thermohydrosulfuricum) protein is Anti-sigma F factor.